The primary structure comprises 1032 residues: MVPIFLKIFFYGFSTNKSKLSEGFQSEQSNNIIENNFHNLFHGNFNTNFLNNNNNNNNNNNNNNNNNNNNNNNNNNNNNNNNIIISSPILSASPSLSPRFQDILENNSVSINIQSSISESPPNSTDWQLEKFDDSMGMISSVISLREQQQQQQQQQQQQQQQQQQQQQQQQQQQQQQQNQQQINLQYQNLQEHCPQNQSHNQSHQQKQNNSTQIPLVQNNQQNLETFSISILDENFNNSGILSMFGEKCKKPKFPHSSIDQYQNLPSDIKMIVENISKMSNFSTQEEIVSVTFKFAFFLTNLSEKTLKILHDSISIFNKIEDLFFQIFLPQSNLIPEIYLKEYILNLFSHLCEREHFLVFNTLKLPLNFMFLCRSYFESFDRLDKIQQNQQLQIQQQNQQQNQQHYNNNNNNNNNNNNNNNNNNNNNNNNNNNNNNNNNNNNNNQQQQTHLQQQYHNYNNNFPITSINIQQQQQQLQPIDIQQLNINNSQNNQNNIQLEQPINHQNQNIYQQFQQFPNQVPSNQNLVGNDIFDTSIITIPQNNISSSQPSFLQQSPPLTHHPSSTQLVNNNLYQFDSNNQQQFQIHYTSPSFIGALASINNNNTTNNINFDNSGNTTTTTTTTTITTTTKTSNNHNSNDNVIINPNGSFLHTIPQEYRTKGSKINLSRKINKSPKGVISPKYRSILPRFGFKMKDLEERSNINGENYIRSRKGVATLINTYLTPISAEMSTKRESKCGVVICIKDHDQHSSVSIVPRLYPMSNGSKDGVEKFVFHKNVISIVCPGVFSHSYSVNRLDRNQRGFFIRYSFYMGKEEIDYVHTPIIRYKNTPSDFDQPSRVLLGHVISLHPVTQNGIVAVKFIAISNLLKKGLITKNITTSTSNLINNENNNENNNNYNGNINSNNNNNEEIEEEEENNNSSGGSSEDDDSDSKVKATRMGKPLEIILYEKNLQFHLTIPQHISKVNPEDKWRFPETLITETNDPKKSKNSSEIIHFVSSYLIEFACIIPRGNYEIIFRYENVNKTVHPIYYSI.

3 disordered regions span residues 54 to 80 (NNNN…NNNN), 391 to 451 (QLQI…QTHL), and 884 to 934 (INNE…SKVK). Over residues 884-907 (INNENNNENNNNYNGNINSNNNNN) the composition is skewed to low complexity.

This is an uncharacterized protein from Dictyostelium discoideum (Social amoeba).